We begin with the raw amino-acid sequence, 552 residues long: Putative phosphate permease MT2339 (552 aa).

13 helical membrane-spanning segments follow: residues 38 to 58, 69 to 89, 107 to 127, 146 to 166, 178 to 198, 213 to 233, 326 to 346, 360 to 380, 389 to 409, 437 to 457, 472 to 492, 493 to 513, and 526 to 546; these read WHLSFSLLLAGSFVLFSWWAF, ILVLATVVGMFMAFNVGGNDV, ALLVAAIFEVSGAVIAGGDVT, DFMNIMLSALSAAALWLLFAN, IIGGIVGAAIALGMVSGQGGA, VSWVLSPVLGGLVSYLLYGVI, VPLVAAAGSMIIVAMLLFKGF, FIIAMVGAAVWMATFIFAKTL, TFLMFSWMQVFTASGFAFSHG, AVPAAAMVTFGVALCAGLWFI, MHPASGFAAELSAAGVVMGAT, VLGLPVSSTHILIGAVLGVGI, and IVLAWVITLPSAAILASVGLV.

Belongs to the inorganic phosphate transporter (PiT) (TC 2.A.20) family.

The protein localises to the cell membrane. Functionally, potential transporter for phosphate. The sequence is that of Putative phosphate permease MT2339 from Mycobacterium tuberculosis (strain CDC 1551 / Oshkosh).